Here is a 294-residue protein sequence, read N- to C-terminus: Aquaporin-B (294 aa).

The interval 1-31 (MSLKRSDDYQDLEEGIAMEDGGNIKDEEEKP) is disordered. At 1–42 (MSLKRSDDYQDLEEGIAMEDGGNIKDEEEKPLDPIEEQNKKR) the chain is on the cytoplasmic side. Positions 22-31 (GNIKDEEEKP) are enriched in basic and acidic residues. The chain crosses the membrane as a helical span at residues 43–63 (WVLIRAVLGELLCTFLFVYVL). Residues 64–79 (CATSANFIRLGSPPNP) are Extracellular-facing. A glycan (O-linked (GalNAc...) serine) is linked at Ser75. The helical transmembrane segment at 80–100 (VVGGLSTGFAAVALIYSFADV) threads the bilayer. Residues 101-123 (SGAHFNPAVTFATCVTRKTSITK) lie on the Cytoplasmic side of the membrane. The short motif at 106-108 (NPA) is the NPA 1 element. A helical membrane pass occupies residues 124–144 (GLMYVGAQLVGSVLASLILLA). The Extracellular portion of the chain corresponds to 145 to 172 (TFPGNFPGDKNAASAVAIAPSTDANIGN). A helical transmembrane segment spans residues 173 to 193 (AFLTELVLTFILVYVIFAVAF). Residues 194-224 (DTVDNSVKTKVVGKSSSNNLTIYTTSGQTKA) are Cytoplasmic-facing. A required for water permeability region spans residues 208 to 219 (SSSNNLTIYTTS). The chain crosses the membrane as a helical span at residues 225 to 245 (GFAPIAIGFTLGFLCFLGGSV). The Extracellular portion of the chain corresponds to 246-268 (SGGAFNPARVFGTALVGNNWTRH). The NPA 2 signature appears at 251–253 (NPA). Residues 269–289 (WMYWIADFLGAGLAGFAQKFF) traverse the membrane as a helical segment. At 290 to 294 (SSTHK) the chain is on the cytoplasmic side.

Belongs to the MIP/aquaporin (TC 1.A.8) family. In terms of processing, glycosylated and non-glycosylated forms exist throughout all developmental stages.

It localises to the cell membrane. It is found in the cytoplasmic vesicle. Functionally, putatively gated water-specific channel, requiring a cysteine residue within the channel. Impermeable to water, glycerol and urea when expressed in Xenopus oocytes. Not regulated by pH; channels remain impermeable to water at pH 7.4 and 5.2. The chain is Aquaporin-B from Dictyostelium discoideum (Social amoeba).